The chain runs to 376 residues: MSKRDYYEVLGVARGASDEELKKAYRRCAMKHHPDRNPGDAAAEAAFKECKEAYEVLSDGNKRRAYDAHGHAAFEHGMGGGGGGPGSPDMGDIFGDIFGNIFGGGAAGPRAARRGADVGYVLELDLEEAVAGIERRIEIPTLIECVSCHGSGSEDGKVQTCGTCHGRGQVRIQRGIFAMQQSCPHCDGRGTLIQNPCKTCHGAGRVEENKVLSIKVPAGVDTGDRIRLAGEGEAGPAGTPPGDLYVEVRVREHAIFQRDGDDLHCEVPIRISQAALGDTVRVATLGGEAEIRIPAETQTGKLFRLRGKGVRSVRSRSEGDLYCRVVVETPVNLTADQRELLQQFEATFTGEDARKHSPKSATFIDGVKGFWDRMTS.

Residues 5-70 (DYYEVLGVAR…NKRRAYDAHG (66 aa)) form the J domain. The CR-type zinc-finger motif lies at 132-209 (GIERRIEIPT…CHGAGRVEEN (78 aa)). Residues cysteine 145, cysteine 148, cysteine 161, cysteine 164, cysteine 183, cysteine 186, cysteine 197, and cysteine 200 each contribute to the Zn(2+) site. CXXCXGXG motif repeat units lie at residues 145 to 152 (CVSCHGSG), 161 to 168 (CGTCHGRG), 183 to 190 (CPHCDGRG), and 197 to 204 (CKTCHGAG).

It belongs to the DnaJ family. In terms of assembly, homodimer. It depends on Zn(2+) as a cofactor.

The protein localises to the cytoplasm. In terms of biological role, participates actively in the response to hyperosmotic and heat shock by preventing the aggregation of stress-denatured proteins and by disaggregating proteins, also in an autonomous, DnaK-independent fashion. Unfolded proteins bind initially to DnaJ; upon interaction with the DnaJ-bound protein, DnaK hydrolyzes its bound ATP, resulting in the formation of a stable complex. GrpE releases ADP from DnaK; ATP binding to DnaK triggers the release of the substrate protein, thus completing the reaction cycle. Several rounds of ATP-dependent interactions between DnaJ, DnaK and GrpE are required for fully efficient folding. Also involved, together with DnaK and GrpE, in the DNA replication of plasmids through activation of initiation proteins. This is Chaperone protein DnaJ from Xanthomonas oryzae pv. oryzae (strain PXO99A).